The primary structure comprises 575 residues: Thiol:disulfide interchange protein DsbD (575 aa).

Residues 1-24 (MIKRTLMLFLLLCSPLLTPAAANA) form the signal peptide. Disulfide bonds link Cys126/Cys132 and Cys192/Cys314. A run of 8 helical transmembrane segments spans residues 180–200 (AILIGIGIAFTPCVLPMYPLI), 216–236 (IFWLALSYVQGMAVTYTLLGL), 253–273 (YVLIGLSVLFILLALSMFGLY), 297–317 (LFGVFAMGALAGLICSPCTTA), 336–356 (GLTLYLYALGMGLPLIAVTLF), 367–387 (WMQYVKEAFGFIILALPVFLL), 394–414 (AWGIRLWSLLAVSFLGWGFVL), and 425–445 (VIQLILLILMLIATRPLQDWF). One can recognise a Thioredoxin domain in the interval 444–575 (WFWGTTVTQQ…FNEHLQHLPK (132 aa)). Cys490 and Cys493 are oxidised to a cystine.

The protein belongs to the thioredoxin family. DsbD subfamily.

It is found in the cell inner membrane. It carries out the reaction [protein]-dithiol + NAD(+) = [protein]-disulfide + NADH + H(+). The enzyme catalyses [protein]-dithiol + NADP(+) = [protein]-disulfide + NADPH + H(+). In terms of biological role, required to facilitate the formation of correct disulfide bonds in some periplasmic proteins and for the assembly of the periplasmic c-type cytochromes. Acts by transferring electrons from cytoplasmic thioredoxin to the periplasm. This transfer involves a cascade of disulfide bond formation and reduction steps. The chain is Thiol:disulfide interchange protein DsbD from Photorhabdus laumondii subsp. laumondii (strain DSM 15139 / CIP 105565 / TT01) (Photorhabdus luminescens subsp. laumondii).